Here is a 331-residue protein sequence, read N- to C-terminus: Ribosomal RNA small subunit methyltransferase C (331 aa).

It belongs to the methyltransferase superfamily. RsmC family. In terms of assembly, monomer.

It is found in the cytoplasm. The enzyme catalyses guanosine(1207) in 16S rRNA + S-adenosyl-L-methionine = N(2)-methylguanosine(1207) in 16S rRNA + S-adenosyl-L-homocysteine + H(+). In terms of biological role, specifically methylates the guanine in position 1207 of 16S rRNA in the 30S particle. This chain is Ribosomal RNA small subunit methyltransferase C, found in Pseudomonas putida (strain W619).